Consider the following 215-residue polypeptide: MANVYDWFEERLEIQAIAEDVTSKYVPPHVNIFYCLGGITLTCFLIQFATGFAMTFYYKPTVAEAFSSVEYIMNEVNFGWLIRSIHRWSASMMVLMMILHVFRVYLTGGFKKPRELTWVSGVILAVITVSFGVTGYSLPWDQVGYWAVKIVSGVPEAIPVVGVLISDLLRGGSSVGQATLTRYYSAHTFVLPWLIAVFMLFHFLMIRKQGISGPL.

The helical transmembrane segment at 32 to 52 threads the bilayer; it reads IFYCLGGITLTCFLIQFATGF. A heme c-binding site is contributed by Cys35. Heme b-binding residues include His86 and His100. Transmembrane regions (helical) follow at residues 90 to 110, 116 to 136, and 186 to 206; these read ASMM…TGGF, LTWV…VTGY, and AHTF…FLMI. Residues His187 and His202 each contribute to the heme b site.

Belongs to the cytochrome b family. PetB subfamily. The 4 large subunits of the cytochrome b6-f complex are cytochrome b6, subunit IV (17 kDa polypeptide, PetD), cytochrome f and the Rieske protein, while the 4 small subunits are PetG, PetL, PetM and PetN. The complex functions as a dimer. The cofactor is heme b. It depends on heme c as a cofactor.

It is found in the cellular thylakoid membrane. Component of the cytochrome b6-f complex, which mediates electron transfer between photosystem II (PSII) and photosystem I (PSI), cyclic electron flow around PSI, and state transitions. The sequence is that of Cytochrome b6 from Desmonostoc sp. (strain PCC 7906) (Nostoc sp. (strain PCC 7906)).